Consider the following 45-residue polypeptide: Peroxidase 3 (45 aa).

It belongs to the peroxidase family. Classical plant (class III) peroxidase subfamily. Heme b serves as cofactor. It depends on Ca(2+) as a cofactor.

The protein resides in the secreted. The enzyme catalyses 2 a phenolic donor + H2O2 = 2 a phenolic radical donor + 2 H2O. Functionally, removal of H(2)O(2), oxidation of toxic reductants, biosynthesis and degradation of lignin, suberization, auxin catabolism, response to environmental stresses such as wounding, pathogen attack and oxidative stress. These functions might be dependent on each isozyme/isoform in each plant tissue. This chain is Peroxidase 3, found in Capsicum annuum (Capsicum pepper).